Here is a 443-residue protein sequence, read N- to C-terminus: Putative phosphoribosyl transferase MT0597 (443 aa).

It in the N-terminal section; belongs to the purine/pyrimidine phosphoribosyltransferase family. In the C-terminal section; belongs to the dienelactone hydrolase family.

The polypeptide is Putative phosphoribosyl transferase MT0597 (Mycobacterium tuberculosis (strain CDC 1551 / Oshkosh)).